The primary structure comprises 307 residues: Protease HtpX homolog 1 (307 aa).

The next 2 membrane-spanning stretches (helical) occupy residues 7–27 (LKTLMFLSGTLTIIAEGIITY) and 38–60 (IFTAIFLVILWLIQWLIAPYLVG). His-133 is a Zn(2+) binding site. Residue Glu-134 is part of the active site. His-137 contributes to the Zn(2+) binding site. 2 consecutive transmembrane segments (helical) span residues 145-165 (IGMALGLIPTIIGYVGNFLLF) and 180-200 (LILGLAMLAIGGVLFVLTFLL). Residue Glu-212 coordinates Zn(2+).

The protein belongs to the peptidase M48B family. The cofactor is Zn(2+).

The protein resides in the cell membrane. The chain is Protease HtpX homolog 1 from Sulfolobus acidocaldarius (strain ATCC 33909 / DSM 639 / JCM 8929 / NBRC 15157 / NCIMB 11770).